The chain runs to 385 residues: Alkanesulfonate monooxygenase (385 aa).

This sequence belongs to the SsuD family.

The catalysed reaction is an alkanesulfonate + FMNH2 + O2 = an aldehyde + FMN + sulfite + H2O + 2 H(+). Functionally, catalyzes the desulfonation of aliphatic sulfonates. The sequence is that of Alkanesulfonate monooxygenase from Paraburkholderia phymatum (strain DSM 17167 / CIP 108236 / LMG 21445 / STM815) (Burkholderia phymatum).